We begin with the raw amino-acid sequence, 452 residues long: Phosphoglucosamine mutase (452 aa).

Catalysis depends on serine 108, which acts as the Phosphoserine intermediate. Residues serine 108, aspartate 247, aspartate 249, and aspartate 251 each contribute to the Mg(2+) site. Residue serine 108 is modified to Phosphoserine.

Belongs to the phosphohexose mutase family. Mg(2+) serves as cofactor. In terms of processing, activated by phosphorylation.

It carries out the reaction alpha-D-glucosamine 1-phosphate = D-glucosamine 6-phosphate. Catalyzes the conversion of glucosamine-6-phosphate to glucosamine-1-phosphate. This is Phosphoglucosamine mutase from Burkholderia pseudomallei (strain 668).